A 37-amino-acid polypeptide reads, in one-letter code: Large ribosomal subunit protein bL36 (37 aa).

It belongs to the bacterial ribosomal protein bL36 family.

This is Large ribosomal subunit protein bL36 from Tropheryma whipplei (strain Twist) (Whipple's bacillus).